Here is a 797-residue protein sequence, read N- to C-terminus: Methionine--tRNA ligase, cytoplasmic (797 aa).

Residues 26–36 (PYVNNVPHLGN) carry the 'HIGH' region motif. Residues 348–352 (KFSKS) carry the 'KMSKS' region motif. Lys-351 lines the ATP pocket. Residues 601–634 (DQLNKTKLSDAKKQKASSKGGGKPKPQPAADREI) form a disordered region. Residues 635–738 (TMARLDIRVG…KTANIGERVT (104 aa)) enclose the tRNA-binding domain.

It belongs to the class-I aminoacyl-tRNA synthetase family.

Its subcellular location is the cytoplasm. The protein resides in the cytosol. The enzyme catalyses tRNA(Met) + L-methionine + ATP = L-methionyl-tRNA(Met) + AMP + diphosphate. The polypeptide is Methionine--tRNA ligase, cytoplasmic (Arabidopsis thaliana (Mouse-ear cress)).